Here is a 774-residue protein sequence, read N- to C-terminus: Shugoshin (774 aa).

Residues 41 to 105 are a coiled coil; that stretch reads SLRIRGLENE…AELSSLLASL (65 aa). Disordered regions lie at residues 106-151, 205-661, and 676-774; these read GEPP…QEGR, SPSP…DAQL, and CASP…SMML. Basic and acidic residues predominate over residues 109–120; it reads PSKRRLSEERRY. The segment covering 214-224 has biased composition (acidic residues); the sequence is AEETETTEQVE. Over residues 297–318 the composition is skewed to polar residues; it reads GDNQNEPNKATKLQQGKENGNE. The span at 382 to 398 shows a compositional bias: basic and acidic residues; it reads KGKEKVDLPAPDKKSAV. Over residues 399–409 the composition is skewed to polar residues; sequence EETQGNSTSAF. Basic and acidic residues-rich tracts occupy residues 482–495 and 549–558; these read NLRD…KELF and FEKEKEKEPQ. 2 stretches are compositionally biased toward polar residues: residues 595-604 and 640-651; these read PSVQEQSTLN and QSMSRSVPTIPT. Positions 706 to 722 are enriched in low complexity; the sequence is ASSAASTETTATASAKP. A compositionally biased stretch (acidic residues) spans 743 to 754; sequence LAQEEEDEEDVG. The span at 765 to 774 shows a compositional bias: basic residues; the sequence is RASRRRSMML.

It belongs to the shugoshin family.

The protein resides in the nucleus. Its subcellular location is the chromosome. It localises to the centromere. Functionally, plays a central role in chromosome cohesion during cell division by preventing premature dissociation of cohesin complex from centromeres after prophase, when most of cohesin complex dissociates from chromosomes arms. This Neurospora crassa (strain ATCC 24698 / 74-OR23-1A / CBS 708.71 / DSM 1257 / FGSC 987) protein is Shugoshin (sgo-1).